Here is a 280-residue protein sequence, read N- to C-terminus: Tritrans,polycis-undecaprenyl-diphosphate synthase (geranylgeranyl-diphosphate specific) (280 aa).

Asp-57 is a catalytic residue. Asp-57 is a Mg(2+) binding site. Substrate contacts are provided by residues Gly-58 to Arg-61, Arg-70, His-74, and Ser-102 to Glu-104. Asn-105 acts as the Proton acceptor in catalysis. Substrate-binding positions include Phe-106, Arg-108, Arg-229, and Arg-235 to Ser-237. Glu-248 serves as a coordination point for Mg(2+).

It belongs to the UPP synthase family. In terms of assembly, homodimer. The cofactor is Mg(2+).

It catalyses the reaction geranylgeranyl diphosphate + 7 isopentenyl diphosphate = tri-trans,hepta-cis-undecaprenyl diphosphate + 7 diphosphate. Its function is as follows. Catalyzes the sequential condensation of isopentenyl diphosphate (IPP) with geranylgeranyl diphosphate (GGPP) to yield (2Z,6Z,10Z,14Z,18Z,22Z,26Z,30E,34E,38E)-undecaprenyl diphosphate (tritrans,heptacis-UPP). It is probably the precursor of glycosyl carrier lipids. The protein is Tritrans,polycis-undecaprenyl-diphosphate synthase (geranylgeranyl-diphosphate specific) of Methanocaldococcus jannaschii (strain ATCC 43067 / DSM 2661 / JAL-1 / JCM 10045 / NBRC 100440) (Methanococcus jannaschii).